Here is an 814-residue protein sequence, read N- to C-terminus: Rho GTPase-activating protein 26 (814 aa).

The BAR domain maps to 7-262 (EFSDCCLDSP…MKENPLEHKT (256 aa)). Positions 265–369 (PYTMEGYLYV…WMEAMDGREP (105 aa)) constitute a PH domain. In terms of domain architecture, Rho-GAP spans 383 to 568 (AQLDSIGFSI…ILIENHEKIF (186 aa)). Residues 624 to 648 (LESVSSNPNSILNSSSSLQPNMNSS) are compositionally biased toward low complexity. The segment at 624–696 (LESVSSNPNS…MPTSSTSSDS (73 aa)) is disordered. A compositionally biased stretch (pro residues) spans 662–672 (SLPPNPSPTSP). A Phosphoserine modification is found at S668. Phosphothreonine is present on T670. S671 bears the Phosphoserine mark. Positions 673-696 (LSPSWPMFSAPSSPMPTSSTSSDS) are enriched in low complexity. Residues 756-814 (TPFRKAKALYACKAEHDSELSFTAGTVFDNVHPSQEPGWLEGTLNGKTGLIPENYVEFL) form the SH3 domain.

Interacts with NYAP1, NYAP2 and MYO16. Interacts with MICAL1 and WDR44. Binds to the C-terminus of PTK2/FAK1. As to quaternary structure, (Microbial infection) Interacts with human parainfluenza virus type 2 proteins P and V. Phosphorylated in a PINK1-dependent fashion promoting retrograde mitochondrial trafficking and clustering.

It is found in the endosome membrane. It localises to the cytoplasm. The protein localises to the cell junction. The protein resides in the focal adhesion. Its subcellular location is the cytoskeleton. Its function is as follows. GTPase-activating protein for RHOA and CDC42. Facilitates mitochondrial quality control by promoting Parkin-mediated recruitment of autophagosomes to damaged mitochondria. Negatively regulates the growth of human parainfluenza virus type 2 by inhibiting hPIV-2-mediated RHOA activation via interaction with two of its viral proteins P and V. In terms of biological role, associates with MICAL1 on the endosomal membrane to promote Rab8-Rab10-dependent tubule extension. After dissociation of MICAL1, recruits WDR44 which connects the endoplasmic reticulum (ER) with the endosomal tubule, thereby participating in the export of a subset of neosynthesized proteins. This Homo sapiens (Human) protein is Rho GTPase-activating protein 26 (ARHGAP26).